Consider the following 264-residue polypeptide: Thymidylate synthase (264 aa).

DUMP is bound at residue arginine 21. Histidine 51 lines the (6R)-5,10-methylene-5,6,7,8-tetrahydrofolate pocket. 126 to 127 contributes to the dUMP binding site; that stretch reads RR. Residue cysteine 146 is the Nucleophile of the active site. Residues 166 to 169, asparagine 177, and 207 to 209 each bind dUMP; these read RSCD and HLY. Position 169 (aspartate 169) interacts with (6R)-5,10-methylene-5,6,7,8-tetrahydrofolate. Serine 263 is a (6R)-5,10-methylene-5,6,7,8-tetrahydrofolate binding site.

This sequence belongs to the thymidylate synthase family. Bacterial-type ThyA subfamily. As to quaternary structure, homodimer.

It is found in the cytoplasm. It carries out the reaction dUMP + (6R)-5,10-methylene-5,6,7,8-tetrahydrofolate = 7,8-dihydrofolate + dTMP. It participates in pyrimidine metabolism; dTTP biosynthesis. Its function is as follows. Catalyzes the reductive methylation of 2'-deoxyuridine-5'-monophosphate (dUMP) to 2'-deoxythymidine-5'-monophosphate (dTMP) while utilizing 5,10-methylenetetrahydrofolate (mTHF) as the methyl donor and reductant in the reaction, yielding dihydrofolate (DHF) as a by-product. This enzymatic reaction provides an intracellular de novo source of dTMP, an essential precursor for DNA biosynthesis. This chain is Thymidylate synthase, found in Buchnera aphidicola subsp. Acyrthosiphon pisum (strain 5A).